We begin with the raw amino-acid sequence, 147 residues long: Cyanate hydratase (147 aa).

Active-site residues include R88, E91, and S114.

Belongs to the cyanase family.

The enzyme catalyses cyanate + hydrogencarbonate + 3 H(+) = NH4(+) + 2 CO2. Functionally, catalyzes the reaction of cyanate with bicarbonate to produce ammonia and carbon dioxide. The protein is Cyanate hydratase of Albidiferax ferrireducens (strain ATCC BAA-621 / DSM 15236 / T118) (Rhodoferax ferrireducens).